We begin with the raw amino-acid sequence, 614 residues long: ATP-dependent RNA helicase dbp-3 (614 aa).

Residues 1–138 (MSSTKKHSRS…GTTTPAASTN (138 aa)) form a disordered region. Positions 9–36 (RSEGEEKDARLAKKVKTDETPVDGEVKK) are enriched in basic and acidic residues. 2 stretches are compositionally biased toward basic residues: residues 37–58 (ERKKDKKEKKDKKEKKDKKSKK) and 91–109 (KKEKKDKKEKKDKKEKKAK). Over residues 117-138 (EESTSASKATTNGTTTPAASTN) the composition is skewed to low complexity. Residues 180–207 (MNFSQLPQSNLISKNPFAAYTNPTPIQS) carry the Q motif motif. Positions 210–394 (WPFSLSGRDV…ESYMINPAQV (185 aa)) constitute a Helicase ATP-binding domain. 223–230 (AETGSGKT) contributes to the ATP binding site. The short motif at 340-343 (DEAD) is the DEAD box element. The Helicase C-terminal domain occupies 435-584 (RLYELLKEAQ…PVPEELLKFG (150 aa)).

The protein belongs to the DEAD box helicase family. DDX5/DBP2 subfamily.

It is found in the nucleus. The protein localises to the nucleolus. It carries out the reaction ATP + H2O = ADP + phosphate + H(+). In terms of biological role, ATP-dependent RNA helicase required for 60S ribosomal subunit synthesis. Involved in efficient pre-rRNA processing, predominantly at site A3, which is necessary for the normal formation of 25S and 5.8S rRNAs. This chain is ATP-dependent RNA helicase dbp-3 (dbp-3), found in Neurospora crassa (strain ATCC 24698 / 74-OR23-1A / CBS 708.71 / DSM 1257 / FGSC 987).